A 175-amino-acid chain; its full sequence is Apoptosis regulator Bcl-2 homolog (175 aa).

A helical transmembrane segment spans residues 152–174 (YYVTRYFRVAAFIITSLAVINLF).

As to quaternary structure, interacts with host BAK1 and BAX as well as other BH3-containing proteins including BIM, BID or PUMA.

It localises to the host membrane. Plays a role in the inhibition of host apoptosis. Interacts with host proapoptotic factors BAK1 and BAX to supposedly prevent their activation. The sequence is that of Apoptosis regulator Bcl-2 homolog (CNPV058) from Canarypox virus (CNPV).